Here is a 66-residue protein sequence, read N- to C-terminus: Large ribosomal subunit protein uL29 (66 aa).

Belongs to the universal ribosomal protein uL29 family.

This Francisella philomiragia subsp. philomiragia (strain ATCC 25017 / CCUG 19701 / FSC 153 / O#319-036) protein is Large ribosomal subunit protein uL29.